A 540-amino-acid polypeptide reads, in one-letter code: DNA-(apurinic or apyrimidinic site) endonuclease (540 aa).

Residues asparagine 206 and glutamate 239 each coordinate Mg(2+). The disordered stretch occupies residues asparagine 256–lysine 276. Residues lysine 263–lysine 276 are compositionally biased toward basic and acidic residues. Aspartate 400, asparagine 402, aspartate 530, and histidine 531 together coordinate Mg(2+). The active-site Proton acceptor is the histidine 531.

This sequence belongs to the DNA repair enzymes AP/ExoA family. Requires Mg(2+) as cofactor. It depends on Mn(2+) as a cofactor. May be proteolytically cleaved.

Its subcellular location is the mitochondrion. It carries out the reaction Exonucleolytic cleavage in the 3'- to 5'-direction to yield nucleoside 5'-phosphates.. Multifunctional protein that plays a central role in mitochondrial DNA base excision repair pathway induced by oxidative stress. Has apurinic/apyrimidinic (AP) endonuclease activity towards double-stranded DNA (dsDNA). Has nucleotide incision repair (NIR) activity; acts on dsDNA with oxidized bases thymine glycol and 5,6-dihydro-2'-deoxyuridine. Has 3'-5' exonuclease; can use dsDNA templates with 3'-OH termini including blunt-end, gapped and mismatched 3'-recessed. Has 3'-phosphatase activity; cleaves 3'-phosphate from blunt, recessed and gapped dsDNA templates, followed by 3'-5' exonuclease activity. Has RNase H-like activity; cleaves RNA on 3'-recessed RNA-DNA duplex. Plays a role in merosome infection of host erythrocytes. The protein is DNA-(apurinic or apyrimidinic site) endonuclease of Plasmodium berghei (strain Anka).